The primary structure comprises 1460 residues: DNA-binding protein RFX7 (1460 aa).

Residues 1 to 34 (MAEEQQQPPPQQPDAHQQLPPSAPNSGVALPALV) are disordered. Residues 108-183 (AFSWIRNTLE…YCYSGLRKKA (76 aa)) constitute a DNA-binding region (RFX-type winged-helix). Residues 188–193 (PTLPNL) carry the PxLPxI/L motif; mediates interaction with ANKRA2 and RFXANK motif. The tract at residues 308-352 (QRKIQKKQQEQKLQSPLPGESAAKKSESATSNGVTNLPNGNPSIL) is disordered. S322 carries the post-translational modification Phosphoserine. Over residues 337 to 352 (TSNGVTNLPNGNPSIL) the composition is skewed to polar residues. S379 bears the Phosphoserine mark. The segment covering 404 to 416 (SVKQAPKTPQNVP) has biased composition (polar residues). The interval 404–428 (SVKQAPKTPQNVPASPGGDRSARHR) is disordered. Residues S418 and S455 each carry the phosphoserine modification. Residues 481 to 513 (TPSNSNTPLKHSASVSSATGTTEESRSVPQIKN) show a composition bias toward polar residues. Disordered regions lie at residues 481–585 (TPSN…PSNE), 632–715 (TFTS…AQIP), and 917–1015 (QSVT…SVPP). Residues 515-535 (SVVSLQSPGSRSSSAGGTSAV) are compositionally biased toward low complexity. The span at 537–549 (VKVEPETSSDEHP) shows a compositional bias: basic and acidic residues. Polar residues-rich tracts occupy residues 563-583 (QTPSALLGQKSNTDGALQKPS) and 632-644 (TFTSSSSPPNGDS). T564 bears the Phosphothreonine mark. S662 carries the phosphoserine modification. The residue at position 704 (K704) is an N6-acetyllysine. Composition is skewed to polar residues over residues 705 to 715 (TEGSTAGAQIP) and 917 to 933 (QSVTPGAPMSSHTSSTH). Positions 947–963 (TPTPTPTPTPTPTPTPT) are enriched in pro residues. Positions 971–1009 (GSQSLSRESPCSRLAQTTPVDSALGSSRHTPIGTPHSNC) are enriched in polar residues. T988 is modified (phosphothreonine). Residues S1178 and S1329 each carry the phosphoserine modification.

This sequence belongs to the RFX family. In terms of assembly, interacts (via PxLPxI/L motif) with RFXANK (via ankyrin repeats). Interacts (via PxLPxI/L motif) with ANKRA2 (via ankyrin repeats). Widely expressed in many different tissue types including thymus and placenta, with high expression in brain. Expressed in both inhibitory and excitatory neurons in cortex.

The protein resides in the nucleus. In terms of biological role, transcription factor. Acts as a transcriptional activator by binding to promoter regions of target genes, such as PDCD4, PIK3IP1, MXD4, PNRC1, and RFX5. Plays a role in natural killer (NK) cell maintenance and immunity. May play a role in the process of ciliogenesis in the neural tube and neural tube closure. The polypeptide is DNA-binding protein RFX7 (Homo sapiens (Human)).